Here is a 93-residue protein sequence, read N- to C-terminus: Neurophysin 1 (93 aa).

7 cysteine pairs are disulfide-bonded: Cys-10–Cys-54, Cys-13–Cys-27, Cys-21–Cys-44, Cys-28–Cys-34, Cys-61–Cys-74, Cys-68–Cys-86, and Cys-75–Cys-80.

Belongs to the vasopressin/oxytocin family.

Functionally, neurophysin 1 specifically binds oxytocin. The sequence is that of Neurophysin 1 from Struthio camelus (Common ostrich).